A 203-amino-acid polypeptide reads, in one-letter code: MYIGRFLVVGKTQQGKPFVSYRVSSRSFPNRKAVINNTNDTVAILPNDLNDMFANPYIAYNCIKIVGNTVIATNGTHTDIIADKIKLELPIRDALALSLIAMDYEKDDYNTPRIAVVLNENTAYMGYVADNDIRIKEVPLKDGLAYYLSTYECCRISTEHQNIVVDGENPEEICKFVMDYEKFEKPVCCATATIDGDIELGTL.

It belongs to the archaeal IMP cyclohydrolase family.

The enzyme catalyses IMP + H2O = 5-formamido-1-(5-phospho-D-ribosyl)imidazole-4-carboxamide. It functions in the pathway purine metabolism; IMP biosynthesis via de novo pathway; IMP from 5-formamido-1-(5-phospho-D-ribosyl)imidazole-4-carboxamide: step 1/1. Functionally, catalyzes the cyclization of 5-formylamidoimidazole-4-carboxamide ribonucleotide to IMP. In Methanococcus aeolicus (strain ATCC BAA-1280 / DSM 17508 / OCM 812 / Nankai-3), this protein is IMP cyclohydrolase.